The sequence spans 491 residues: Cytochrome P450 2B9 (491 aa).

At S128 the chain carries Phosphoserine; by PKA. Residue C436 coordinates heme.

Belongs to the cytochrome P450 family. The cofactor is heme.

The protein resides in the endoplasmic reticulum membrane. It localises to the microsome membrane. The catalysed reaction is an organic molecule + reduced [NADPH--hemoprotein reductase] + O2 = an alcohol + oxidized [NADPH--hemoprotein reductase] + H2O + H(+). In terms of biological role, cytochromes P450 are a group of heme-thiolate monooxygenases. In liver microsomes, this enzyme is involved in an NADPH-dependent electron transport pathway. It oxidizes a variety of structurally unrelated compounds, including steroids, fatty acids, and xenobiotics. The polypeptide is Cytochrome P450 2B9 (Cyp2b9) (Mus musculus (Mouse)).